The sequence spans 480 residues: ATP synthase subunit beta (480 aa).

Position 153-160 (153-160) interacts with ATP; that stretch reads GGAGVGKT.

It belongs to the ATPase alpha/beta chains family. F-type ATPases have 2 components, CF(1) - the catalytic core - and CF(0) - the membrane proton channel. CF(1) has five subunits: alpha(3), beta(3), gamma(1), delta(1), epsilon(1). CF(0) has three main subunits: a(1), b(2) and c(9-12). The alpha and beta chains form an alternating ring which encloses part of the gamma chain. CF(1) is attached to CF(0) by a central stalk formed by the gamma and epsilon chains, while a peripheral stalk is formed by the delta and b chains.

Its subcellular location is the cell membrane. The catalysed reaction is ATP + H2O + 4 H(+)(in) = ADP + phosphate + 5 H(+)(out). Its function is as follows. Produces ATP from ADP in the presence of a proton gradient across the membrane. The catalytic sites are hosted primarily by the beta subunits. This chain is ATP synthase subunit beta, found in Lactobacillus johnsonii (strain CNCM I-12250 / La1 / NCC 533).